Here is a 185-residue protein sequence, read N- to C-terminus: MALQDDKPGSAPKERSGRQIRSSAARLAAVQALYVLDLAEDARVDQVVLDFMSGSMGGMAIVEVADPEGIFDPTEEIAALEPPDGELFAMLVRGAHAELARLDEVIGASLSADWPWDRLEPVVRAVLRAGVYELLERQRTPPRVAIKEYVDIAAAFYSGAEPGMVNAVLDRVARSARPEAFGGGV.

Belongs to the NusB family.

Its function is as follows. Involved in transcription antitermination. Required for transcription of ribosomal RNA (rRNA) genes. Binds specifically to the boxA antiterminator sequence of the ribosomal RNA (rrn) operons. This Rhodospirillum rubrum (strain ATCC 11170 / ATH 1.1.1 / DSM 467 / LMG 4362 / NCIMB 8255 / S1) protein is Transcription antitermination protein NusB.